Here is a 394-residue protein sequence, read N- to C-terminus: Salivary plasminogen activator gamma (394 aa).

An N-terminal signal peptide occupies residues 1 to 36 (MVNTMKTKLLCVLLLCGAVFSLPRQETYRQLARGSR). One can recognise a Kringle domain in the interval 45 to 126 (CYKDQGVTYR…TSESCSVPVC (82 aa)). Cystine bridges form between C45-C126, C66-C108, C97-C121, C131-C262, C174-C190, C182-C251, C276-C351, C308-C324, and C341-C369. A Peptidase S1 domain is found at 143-393 (STGGLFTDIT…YLGWIRDNMR (251 aa)). Active-site charge relay system residues include H189 and D238. N315 carries an N-linked (GlcNAc...) asparagine glycan. Catalysis depends on S345, which acts as the Charge relay system.

The protein belongs to the peptidase S1 family. As to quaternary structure, monomer.

The protein resides in the secreted. It catalyses the reaction Specific cleavage of Arg-|-Val bond in plasminogen to form plasmin.. Its function is as follows. Probably essential to support the feeding habits of this exclusively haematophagous animal. Probable potent thrombolytic agent. This is Salivary plasminogen activator gamma from Desmodus rotundus (Vampire bat).